A 450-amino-acid polypeptide reads, in one-letter code: Phospho-2-dehydro-3-deoxyheptonate aldolase (450 aa).

The span at 1 to 13 (MTVNAKTSPSAGN) shows a compositional bias: polar residues. A disordered region spans residues 1–20 (MTVNAKTSPSAGNTWRDLPA).

The protein belongs to the class-II DAHP synthase family. As to quaternary structure, homodimer.

It catalyses the reaction D-erythrose 4-phosphate + phosphoenolpyruvate + H2O = 7-phospho-2-dehydro-3-deoxy-D-arabino-heptonate + phosphate. The protein operates within metabolic intermediate biosynthesis; chorismate biosynthesis; chorismate from D-erythrose 4-phosphate and phosphoenolpyruvate: step 1/7. The chain is Phospho-2-dehydro-3-deoxyheptonate aldolase (aroH) from Streptomyces coelicolor (strain ATCC BAA-471 / A3(2) / M145).